Here is a 576-residue protein sequence, read N- to C-terminus: Colicin-E7 (576 aa).

Disordered stretches follow at residues Met1–Ser75, Ser421–Asp478, and Asp506–Asp557. The segment covering Asn19 to Asp35 has biased composition (gly residues). Residues Gly36–Pro45 are compositionally biased toward low complexity. A compositionally biased stretch (gly residues) spans Trp46–Ser75. Composition is skewed to basic and acidic residues over residues Leu424 to Arg447 and Ser535 to Pro548. Positions 544, 569, and 573 each coordinate Zn(2+).

The protein belongs to the colicin/pyosin nuclease family.

In terms of biological role, this plasmid-coded bactericidal protein is an endonuclease active on both single- and double-stranded DNA but with undefined specificity. Colicins are polypeptide toxins produced by and active against E.coli and closely related bacteria. This is Colicin-E7 (colE7) from Escherichia coli.